A 586-amino-acid chain; its full sequence is Pyruvate kinase (586 aa).

A substrate-binding site is contributed by arginine 32. Residues asparagine 34, serine 36, aspartate 66, and threonine 67 each coordinate K(+). Position 34–37 (34–37 (NFSH)) interacts with ATP. 2 residues coordinate ATP: arginine 73 and lysine 156. Glutamate 222 provides a ligand contact to Mg(2+). Substrate-binding residues include glycine 245, aspartate 246, and threonine 278. Residue aspartate 246 participates in Mg(2+) binding.

This sequence belongs to the pyruvate kinase family. In the C-terminal section; belongs to the PEP-utilizing enzyme family. In terms of assembly, homotetramer. Requires Mg(2+) as cofactor. K(+) is required as a cofactor.

It carries out the reaction pyruvate + ATP = phosphoenolpyruvate + ADP + H(+). It functions in the pathway carbohydrate degradation; glycolysis; pyruvate from D-glyceraldehyde 3-phosphate: step 5/5. This is Pyruvate kinase (pyk) from Sporosarcina psychrophila (Bacillus psychrophilus).